We begin with the raw amino-acid sequence, 245 residues long: RNA polymerase sigma factor SigI5 (245 aa).

The Polymerase core binding motif lies at 60–73 (DEYSIGLMAFNEAI). The H-T-H motif DNA-binding region spans 202–221 (MKELSKIIDVHPKTVERNRA).

The protein belongs to the sigma-70 factor family. SigI subfamily. As to quaternary structure, interacts with RsgI5.

It is found in the cytoplasm. With respect to regulation, negatively regulated by the anti-sigma-I factor RsgI5. Binding of the polysaccharide substrate to RsgI5 may lead to the release and activation of SigI5. Its function is as follows. Sigma factors are initiation factors that promote the attachment of RNA polymerase to specific initiation sites and are then released. This sigma factor is involved in regulation of cellulosomal genes via an external polysaccharide-sensing mechanism. In Acetivibrio thermocellus (strain ATCC 27405 / DSM 1237 / JCM 9322 / NBRC 103400 / NCIMB 10682 / NRRL B-4536 / VPI 7372) (Clostridium thermocellum), this protein is RNA polymerase sigma factor SigI5.